The following is a 295-amino-acid chain: Ornithine carbamoyltransferase, catabolic (295 aa).

Carbamoyl phosphate is bound by residues 49–52 (STRT), Q76, R100, and 127–130 (HPCQ). Residues N155, D213, and 217-218 (SM) each bind L-ornithine. Carbamoyl phosphate is bound by residues 253-254 (CL) and R281.

The protein belongs to the aspartate/ornithine carbamoyltransferase superfamily. OTCase family. Homohexamer.

The protein resides in the cytoplasm. The enzyme catalyses carbamoyl phosphate + L-ornithine = L-citrulline + phosphate + H(+). It functions in the pathway amino-acid degradation; L-arginine degradation via ADI pathway; carbamoyl phosphate from L-arginine: step 2/2. Arginine lead to a slight activation. Inhibited by all nucleotide phosphates. Reversibly catalyzes the transfer of the carbamoyl group from carbamoyl phosphate (CP) to the N(epsilon) atom of ornithine (ORN) to produce L-citrulline. The sequence is that of Ornithine carbamoyltransferase, catabolic (arcB) from Halobacterium salinarum (strain ATCC 700922 / JCM 11081 / NRC-1) (Halobacterium halobium).